The sequence spans 284 residues: Plastid-lipid-associated protein 6, chloroplastic (284 aa).

Residues 1 to 11 (MATSSTFSSLL) are compositionally biased toward low complexity. The segment at 1–47 (MATSSTFSSLLPSPPALLSDHRSPPPSIRYSFSPLTTPKSSRLGFTV) is disordered. A chloroplast-targeting transit peptide spans 1–72 (MATSSTFSSL…SIGGESDPPP (72 aa)). 5 positions are modified to phosphoserine: Ser96, Ser105, Ser148, Ser151, and Ser155.

Belongs to the PAP/fibrillin family. As to quaternary structure, part of the Photosystem II light-harvesting complex (LHCII). Post-translationally, phosphorylated as part of a basal defense response.

The protein resides in the plastid. Its subcellular location is the chloroplast. The protein localises to the plastoglobule. In terms of biological role, required for plastoglobule development and resistance to multiple stresses. Regulates plastoglobule osmiophilic content. May be involved in the transport of lipophilic antioxidants in and out of the plastoglobule. The protein is Plastid-lipid-associated protein 6, chloroplastic of Arabidopsis thaliana (Mouse-ear cress).